We begin with the raw amino-acid sequence, 991 residues long: MATGAENQWLKGRVKAVTSGDCLVITALSHNRAGPPPEKTITFSSLMAPKMARRGGIDEPFAWESKEFLRKLCIGKEVAFKVDYKVEAIAGREFGSVFLGNENLAKLVVKTGWAKVREPGQQNQDKVSPYIKELLQLEELAKQEGYGRWSKVPGAAEASIRNLPPSAIGDSAGFDAMGLLAANKGKPMEGIVEQVRDGSTIRVYLLPEFQFVQVFVAGVQAPSMGRRTTNGSVVETVPDEPNGDVSAESRGPLTTAQRLAASAASSVEVSSDPFATEAKYFTEHRVLSRDVRIVLEGVDKFNNLIGSVHYSDGETVKDLGLELVENGLAKFVEWSANMMEEEAKKKLKAAELQCKKDKVKMWANYVPPATNSKAIHDQNFTGKVVEVVSGDCLIVADDAVPFGSPAAERRVCLSSIRSPKMGNPRREEKPAPYAREAREFLRQRLIGKQVIVQMEYSRKVTQGDGPTTSGAADRFMDFGSVFLPSAAKADSDEVTAPPAAAIAGSQPVGVNIAELVLVRGFGNVVRHRDFEERSNHYDALLAAEARALAGKKGIHSAKESPAMHITDLTVSAAKKAKDFLPSLQRIRRIPAVVEYVLSGHRFKLYIPKITCSIAFSFSGVRCPGRGEPYSEEAISVMRRRIMQRDVEIEVETVDRTGTFLGSMWESRTNVATVLLEAGLAKMQTSFGADRIAEAHLLEQAERSAKNQKLKIWENYVEGEEVSNGNTNTVETRQKETLKVVVTEVLGGGRFYVQSAGDQKIASIQNQLASLSIKDAPIIGSFNPKRGDIVLAQFSLDNSWNRAMIVTAPRAAVQSPDEKFEVFYIDYGNQETVPYSAIRPIDPSVSAAPGLAQLCRLAYIKVPSLEDDFGPEAGEYLHTVTLGSGKEFKAVIEERDTSGGKVKGQGTGTEFVVTLIAVDDEISVNAAMLQEGIARMEKRQKWGHKGKQAALDALEKFQEEARKSRIGIWQYGDIESDDEDTGPARKPAGGRR.

Position 2 is an N-acetylalanine (Ala2). TNase-like domains follow at residues 8–151 (QWLK…RWSK), 186–364 (KPME…MWAN), 378–557 (QNFT…IHSA), and 587–714 (RRIP…IWEN). Positions 227 to 250 (RTTNGSVVETVPDEPNGDVSAESR) are disordered. A Tudor domain is found at 782-847 (NPKRGDIVLA…RPIDPSVSAA (66 aa)). Tyr970 carries the post-translational modification Phosphotyrosine. A disordered region spans residues 971–991 (GDIESDDEDTGPARKPAGGRR). At Ser975 the chain carries Phosphoserine. Phosphothreonine is present on Thr980.

In terms of tissue distribution, expressed in seeds, leaves, flowers, roots and siliques (at protein level). Accumulates in the cap and elongation zone of the root apices (at protein level).

It localises to the cytoplasm. It is found in the cytoplasmic granule. The protein resides in the perinuclear region. The protein localises to the endoplasmic reticulum. With respect to regulation, repressed by the specific inhibitor 3',5'-deoxythymidine bisphosphate (pdTp); this RNase activity inhibition impairs subcellular relocation upon abiotic stress and leads to reduced stress resistance. In terms of biological role, cytoprotective ribonuclease (RNase) required for resistance to abiotic stresses, acting as a positive regulator of mRNA decapping during stress. Essential for the integrity and function of cytoplasmic messenger ribonucleoprotein (mRNP) complexes called stress granules (SGs) and processing bodies (PBs), sites of post-transcriptional gene regulation during stress (e.g. salt and heat). Involved in gibberellic acid (GA) biosynthesis. Essential for stress tolerance, probably by regulating mRNAs entering the secretory pathway. Component of stress granules (SGs) that regulates growth under salt stress by modulating levels of GA20OX3 mRNA. Binds GA20OX3 mRNA. May inhibit the degradation of mRNAs involved in stress adaptation. The chain is Ribonuclease TUDOR 1 from Arabidopsis thaliana (Mouse-ear cress).